The sequence spans 242 residues: Ubiquinone biosynthesis O-methyltransferase (242 aa).

Residues Arg-44, Gly-64, Asp-85, and Met-129 each coordinate S-adenosyl-L-methionine.

Belongs to the methyltransferase superfamily. UbiG/COQ3 family.

It catalyses the reaction a 3-demethylubiquinol + S-adenosyl-L-methionine = a ubiquinol + S-adenosyl-L-homocysteine + H(+). The enzyme catalyses a 3-(all-trans-polyprenyl)benzene-1,2-diol + S-adenosyl-L-methionine = a 2-methoxy-6-(all-trans-polyprenyl)phenol + S-adenosyl-L-homocysteine + H(+). Its pathway is cofactor biosynthesis; ubiquinone biosynthesis. Functionally, O-methyltransferase that catalyzes the 2 O-methylation steps in the ubiquinone biosynthetic pathway. The polypeptide is Ubiquinone biosynthesis O-methyltransferase (Klebsiella pneumoniae subsp. pneumoniae (strain ATCC 700721 / MGH 78578)).